A 221-amino-acid polypeptide reads, in one-letter code: Vesicle-associated membrane protein 722 (221 aa).

Over 1 to 196 the chain is Cytoplasmic; the sequence is MAQQSLIYSF…MWFQNMKIKL (196 aa). Residues 10–114 enclose the Longin domain; sequence FVARGTVILV…SLNKEFGSKL (105 aa). One can recognise a v-SNARE coiled-coil homology domain in the interval 130–190; it reads KLAKVKAQVS…TQMRRKMWFQ (61 aa). Residues 197 to 217 traverse the membrane as a helical; Anchor for type IV membrane protein segment; it reads IVLAIIIALILIIILSICGGF. Topologically, residues 218–221 are vesicular; it reads NCGK.

Belongs to the synaptobrevin family. In terms of tissue distribution, highly expressed in stems and roots. Detected in flowers and leaves.

It is found in the cell membrane. The protein localises to the early endosome membrane. Involved in the targeting and/or fusion of transport vesicles to their target membrane. The polypeptide is Vesicle-associated membrane protein 722 (Arabidopsis thaliana (Mouse-ear cress)).